A 20-amino-acid chain; its full sequence is Unknown protein NF019 from 2D-PAGE (20 aa).

This is Unknown protein NF019 from 2D-PAGE from Naegleria fowleri (Brain eating amoeba).